The following is a 90-amino-acid chain: MNYFAVICIFSCICLWQFSDAAPFISVQSSSQSRSQKVMNGMLRTLYDYSVQDSVNDATGHLIQTHKADFNSDVMSPDEIESVRQQLNMA.

The signal sequence occupies residues 1-21 (MNYFAVICIFSCICLWQFSDA).

As to expression, main cells and secondary cells of the accessory glands of 1 day old virgin males (at protein level). In 5 day old virgin males, only detected in the secondary cells (at protein level). Reappears in the main cells after mating (at protein level). First detected in adult males 3-4 hr after eclosion, levels increase reaching a peak at day 3-5 which is maintained until at least day 10 of adulthood (at protein level). In unmated male adults, levels are maintained for the first 6 days of adulthood and then gradually decrease for at least the next 8 days. No expression in females.

It localises to the secreted. Its subcellular location is the extracellular space. It is found in the cytoplasm. In terms of biological role, this protein is transferred from male to female during mating and may affect egglaying and behavior after mating. The sequence is that of Accessory gland-specific peptide 26Ab from Drosophila melanogaster (Fruit fly).